Reading from the N-terminus, the 439-residue chain is Ribosomal protein uS12 methylthiotransferase RimO (439 aa).

The 113-residue stretch at 2–114 folds into the MTTase N-terminal domain; the sequence is SKLYLMSLGC…IDEMILKKTN (113 aa). [4Fe-4S] cluster is bound by residues Cys11, Cys45, Cys77, Cys146, Cys150, and Cys153. Residues 132–363 form the Radical SAM core domain; sequence TGSNSHAFIK…VDEVIEKSFE (232 aa).

The protein belongs to the methylthiotransferase family. RimO subfamily. Requires [4Fe-4S] cluster as cofactor.

It localises to the cytoplasm. The enzyme catalyses L-aspartate(89)-[ribosomal protein uS12]-hydrogen + (sulfur carrier)-SH + AH2 + 2 S-adenosyl-L-methionine = 3-methylsulfanyl-L-aspartate(89)-[ribosomal protein uS12]-hydrogen + (sulfur carrier)-H + 5'-deoxyadenosine + L-methionine + A + S-adenosyl-L-homocysteine + 2 H(+). Functionally, catalyzes the methylthiolation of an aspartic acid residue of ribosomal protein uS12. The chain is Ribosomal protein uS12 methylthiotransferase RimO from Campylobacter jejuni subsp. jejuni serotype O:2 (strain ATCC 700819 / NCTC 11168).